The following is a 138-amino-acid chain: uncharacterized protein (138 aa).

A helical transmembrane segment spans residues 11-33 (ILLGLTLSLTFLYPLIITLIILY).

The protein localises to the membrane. This is an uncharacterized protein from Aquifex aeolicus (strain VF5).